Consider the following 325-residue polypeptide: Peroxidase 47 (325 aa).

An N-terminal signal peptide occupies residues 1–36; that stretch reads MLTRFKKQNNKMVRANIVSMVLLMHAIVGFPFHARG. 4 disulfide bridges follow: Cys-46/Cys-125, Cys-79/Cys-84, Cys-131/Cys-321, and Cys-209/Cys-235. His-77 functions as the Proton acceptor in the catalytic mechanism. Residues Asp-78, Gly-83, Asp-85, and Ser-87 each coordinate Ca(2+). Pro-172 serves as a coordination point for substrate. N-linked (GlcNAc...) asparagine glycosylation is present at Asn-177. His-202 provides a ligand contact to heme b. Thr-203 contacts Ca(2+). 3 residues coordinate Ca(2+): Asp-246, Thr-248, and Asp-253.

Belongs to the peroxidase family. Classical plant (class III) peroxidase subfamily. The cofactor is heme b. It depends on Ca(2+) as a cofactor.

The protein localises to the secreted. The enzyme catalyses 2 a phenolic donor + H2O2 = 2 a phenolic radical donor + 2 H2O. In terms of biological role, removal of H(2)O(2), oxidation of toxic reductants, biosynthesis and degradation of lignin, suberization, auxin catabolism, response to environmental stresses such as wounding, pathogen attack and oxidative stress. These functions might be dependent on each isozyme/isoform in each plant tissue. In Arabidopsis thaliana (Mouse-ear cress), this protein is Peroxidase 47 (PER47).